Reading from the N-terminus, the 253-residue chain is MGARASQEPRTRVRAGLRVLLPVLLLALLLLALVAPGAQGARGRGAADKNSHRRATSSFSQSVSSLFGEDNVRAAQKLLSRLTERFVQGVDMFLETLWKVWMELLEVLGLDVSNLSQYFSPASVSNSPTRALVLVGVVLLAYWFLSLTLGFTFSLLHLVFGRFFWLVRVILFSMSCVYILHKYEGEPEHAVLPLCVVVAIYFMTGPMGYWRGSPGGLCSPSVEEKLEHLENQVRLLNIRLNRVLENLDRSKDK.

4 helical membrane passes run valine 19–glutamine 39, alanine 131–phenylalanine 151, phenylalanine 164–histidine 181, and alanine 190–tryptophan 210. Positions serine 219 to lysine 253 form a coiled coil. Serine 250 carries the post-translational modification Phosphoserine.

In terms of assembly, interacts with LETMD1. Interacts with BRI3. Interacts with BRI3; the interaction is weak. Interacts with TMEM238L.

It localises to the mitochondrion outer membrane. Involved in tumorigenesis and may function by stabilizing p53/TP53. The sequence is that of BRI3-binding protein from Mus musculus (Mouse).